Reading from the N-terminus, the 187-residue chain is Large ribosomal subunit protein uL5 (187 aa).

This sequence belongs to the universal ribosomal protein uL5 family. In terms of assembly, part of the 50S ribosomal subunit; part of the 5S rRNA/L5/L18/L25 subcomplex. Contacts the 5S rRNA and the P site tRNA. Forms a bridge to the 30S subunit in the 70S ribosome.

Its function is as follows. This is one of the proteins that bind and probably mediate the attachment of the 5S RNA into the large ribosomal subunit, where it forms part of the central protuberance. In the 70S ribosome it contacts protein S13 of the 30S subunit (bridge B1b), connecting the 2 subunits; this bridge is implicated in subunit movement. Contacts the P site tRNA; the 5S rRNA and some of its associated proteins might help stabilize positioning of ribosome-bound tRNAs. This Mycobacterium bovis (strain ATCC BAA-935 / AF2122/97) protein is Large ribosomal subunit protein uL5.